A 428-amino-acid chain; its full sequence is Protein Wnt-8b (428 aa).

A signal peptide spans 1–22 (MFYTGSFWFIFFILPAIPFCHS). A disulfide bond links Cys54 and Cys65. Asn123 and Asn176 each carry an N-linked (GlcNAc...) asparagine glycan. Disulfide bonds link Cys177–Cys185, Cys187–Cys205, Cys253–Cys267, Cys255–Cys262, Cys329–Cys367, Cys345–Cys360, Cys364–Cys406, Cys382–Cys397, Cys384–Cys394, and Cys389–Cys390. Ser259 is lipidated: O-palmitoleoyl serine. An N-linked (GlcNAc...) asparagine glycan is attached at Asn332.

This sequence belongs to the Wnt family. Post-translationally, palmitoleoylation is required for efficient binding to frizzled receptors. Depalmitoleoylation leads to Wnt signaling pathway inhibition. In terms of processing, proteolytic processing by tiki1 and tiki2 promotes oxidation and formation of large disulfide-bond oligomers, leading to inactivation of wnt8b. In terms of tissue distribution, in adults, in brain.

The protein localises to the secreted. It localises to the extracellular space. Its subcellular location is the extracellular matrix. In terms of biological role, ligand for members of the frizzled family of seven transmembrane receptors. Plays a role in the initiation of dorsal axis development. May activate a Nieuwkoop center-like signaling pathway. This chain is Protein Wnt-8b (wnt8b), found in Xenopus laevis (African clawed frog).